Consider the following 641-residue polypeptide: Epithelial sodium channel subunit beta (641 aa).

The Cytoplasmic portion of the chain corresponds to 1-50; sequence MHVKKYLLKCLHRLQKGPGYTYKELLVWYCDNTNTHGPKRIIREGPKKKA. A helical membrane pass occupies residues 51 to 71; sequence MWFLITLLFASLVCWQWGVFI. Over 72–533 the chain is Extracellular; that stretch reads KTYLSWEVSV…GGQFGFWMGG (462 aa). Cystine bridges form between cysteine 98/cysteine 273, cysteine 185/cysteine 190, cysteine 197/cysteine 204, cysteine 250/cysteine 257, cysteine 362/cysteine 449, cysteine 387/cysteine 445, cysteine 391/cysteine 441, cysteine 400/cysteine 427, and cysteine 402/cysteine 416. A glycan (N-linked (GlcNAc...) asparagine) is linked at asparagine 141. N-linked (GlcNAc...) asparagine glycosylation is found at asparagine 261 and asparagine 379. The chain crosses the membrane as a helical span at residues 534–554; that stretch reads SVLCLIEFAEIIIDFVWITII. The Cytoplasmic portion of the chain corresponds to 555 to 641; sequence KLVALAKGLR…VESDSEGDAV (87 aa). Residues 596-641 form a disordered region; sequence GHRSPDAEAYPDEQALPIPGTPPPNYDSLRLQPLDVVESDSEGDAV. A PY motif; recruits WW domain-containing proteins and is thereby required for ubiquitination and inhibition of the channel by NEDD4 and NEDD4L motif is present at residues 617–621; that stretch reads PPPNY. The segment covering 632–641 has biased composition (acidic residues); sequence VESDSEGDAV. Phosphoserine occurs at positions 634 and 636.

This sequence belongs to the amiloride-sensitive sodium channel (TC 1.A.6) family. SCNN1B subfamily. Component of the heterotrimeric epithelial sodium channel (ENaC) composed of an alpha/SCNN1A, a beta/SCNN1B and a gamma/SCNN1G subunit. Interacts with WWP1 (via WW domains). Interacts with WWP2 (via WW domains); inhibits the channel. Interacts with the full-length immature form of PCSK9 (pro-PCSK9). Interacts (N-glycosylated) with BPIFA1; the interaction is direct and inhibits the proteolytic processing of SCNN1A and SCNN1G and the activation of ENaC. In terms of processing, ubiquitinated. Can be ubiquitinated at multiple sites and undergo monoubiquitination and polyubiquitination. Ubiquitination by NEDD4 or NEDD4L inhibits the ENaC channel through endocytosis, intracellular retention and degradation of its individual subunits. However, some studies could not confirm the ubiquitination of this subunit of the ENaC. Post-translationally, phosphorylated on serine and threonine residues. Aldosterone and insulin increase the basal level of phosphorylation. N-glycosylated. N-glycosylation is required for interaction with BPIFA1.

Its subcellular location is the apical cell membrane. It is found in the cytoplasmic vesicle membrane. The catalysed reaction is Na(+)(in) = Na(+)(out). Its activity is regulated as follows. Originally identified and characterized by its inhibition by the diuretic drug amiloride. Functionally, this is one of the three pore-forming subunits of the heterotrimeric epithelial sodium channel (ENaC), a critical regulator of sodium balance and fluid homeostasis. ENaC operates in epithelial tissues, where it mediates the electrodiffusion of sodium ions from extracellular fluid through the apical membrane of cells, with water following osmotically. It plays a key role in maintaining sodium homeostasis through electrogenic sodium reabsorption in the kidneys. Additionally, ENaC is essential for airway surface liquid homeostasis, which is crucial for proper mucus clearance. The chain is Epithelial sodium channel subunit beta from Oryctolagus cuniculus (Rabbit).